The chain runs to 151 residues: MTLERTFVAIKPDGVQRGLIAEILGRFETKGFKLVGLKQLTPSKELAEKHYGVHKDRPFFSGLVDFITSGPVIAMVWEGEGVIASARKLIGATKPLEAEPGTIRGDLAVNIGRNVIHGSDGSDTAVFEINLWFQENELVDWNPSDQAWRVE.

The ATP site is built by Lys11, Phe59, Arg87, Thr93, Arg104, and Asn114. His117 functions as the Pros-phosphohistidine intermediate in the catalytic mechanism.

The protein belongs to the NDK family. As to quaternary structure, homotetramer. The cofactor is Mg(2+).

It localises to the cytoplasm. The enzyme catalyses a 2'-deoxyribonucleoside 5'-diphosphate + ATP = a 2'-deoxyribonucleoside 5'-triphosphate + ADP. It catalyses the reaction a ribonucleoside 5'-diphosphate + ATP = a ribonucleoside 5'-triphosphate + ADP. Its function is as follows. Major role in the synthesis of nucleoside triphosphates other than ATP. The ATP gamma phosphate is transferred to the NDP beta phosphate via a ping-pong mechanism, using a phosphorylated active-site intermediate. This chain is Nucleoside diphosphate kinase, found in Prochlorococcus marinus (strain NATL2A).